Reading from the N-terminus, the 217-residue chain is 4-hydroxy-tetrahydrodipicolinate reductase (217 aa).

Residues 7-12 (GFKGKM), 71-73 (GTT), and 95-98 (SYNF) contribute to the NAD(+) site. The active-site Proton donor/acceptor is His127. Position 128 (His128) interacts with (S)-2,3,4,5-tetrahydrodipicolinate. The active-site Proton donor is Lys131. 137-138 (GT) is a binding site for (S)-2,3,4,5-tetrahydrodipicolinate.

This sequence belongs to the DapB family.

It localises to the cytoplasm. The enzyme catalyses (S)-2,3,4,5-tetrahydrodipicolinate + NAD(+) + H2O = (2S,4S)-4-hydroxy-2,3,4,5-tetrahydrodipicolinate + NADH + H(+). It carries out the reaction (S)-2,3,4,5-tetrahydrodipicolinate + NADP(+) + H2O = (2S,4S)-4-hydroxy-2,3,4,5-tetrahydrodipicolinate + NADPH + H(+). Its pathway is amino-acid biosynthesis; L-lysine biosynthesis via DAP pathway; (S)-tetrahydrodipicolinate from L-aspartate: step 4/4. In terms of biological role, catalyzes the conversion of 4-hydroxy-tetrahydrodipicolinate (HTPA) to tetrahydrodipicolinate. In Thermosipho africanus (strain TCF52B), this protein is 4-hydroxy-tetrahydrodipicolinate reductase.